The chain runs to 284 residues: Nucleotide-binding protein Sputw3181_3461 (284 aa).

8–15 lines the ATP pocket; that stretch reads GRSGSGKS. A GTP-binding site is contributed by 56 to 59; it reads DVRN.

It belongs to the RapZ-like family.

Functionally, displays ATPase and GTPase activities. This Shewanella sp. (strain W3-18-1) protein is Nucleotide-binding protein Sputw3181_3461.